We begin with the raw amino-acid sequence, 147 residues long: Putative HTH-type transcriptional regulator slr0846 (147 aa).

Residues 2–130 (KLTTKSHYSV…YSITLADLYY (129 aa)) form the HTH rrf2-type domain.

The sequence is that of Putative HTH-type transcriptional regulator slr0846 from Synechocystis sp. (strain ATCC 27184 / PCC 6803 / Kazusa).